The following is a 219-amino-acid chain: Small ribosomal subunit protein uS4 (219 aa).

An S4 RNA-binding domain is found at 112-174 (RRLQTQVLRL…GSSPLMSESH (63 aa)). The interval 193–219 (KAAAEAKQARERPPERGGGRKKRGGRR) is disordered. Positions 199-210 (KQARERPPERGG) are enriched in basic and acidic residues.

The protein belongs to the universal ribosomal protein uS4 family. As to quaternary structure, part of the 30S ribosomal subunit. Contacts protein S5. The interaction surface between S4 and S5 is involved in control of translational fidelity.

Functionally, one of the primary rRNA binding proteins, it binds directly to 16S rRNA where it nucleates assembly of the body of the 30S subunit. In terms of biological role, with S5 and S12 plays an important role in translational accuracy. This is Small ribosomal subunit protein uS4 from Methanosarcina mazei (strain ATCC BAA-159 / DSM 3647 / Goe1 / Go1 / JCM 11833 / OCM 88) (Methanosarcina frisia).